Reading from the N-terminus, the 26-residue chain is Delta-hemolysin (26 aa).

Methionine 1 is modified (N-formylmethionine).

This sequence belongs to the delta-lysin family.

The protein resides in the secreted. It localises to the host cell membrane. Functionally, lyses erythrocytes and many other mammalian cells. The chain is Delta-hemolysin (hld) from Staphylococcus aureus (strain Mu50 / ATCC 700699).